A 313-amino-acid polypeptide reads, in one-letter code: Aspartate carbamoyltransferase catalytic subunit (313 aa).

Carbamoyl phosphate is bound by residues Arg-58 and Thr-59. An L-aspartate-binding site is contributed by Lys-86. Carbamoyl phosphate contacts are provided by Arg-108, His-136, and Gln-139. L-aspartate contacts are provided by Arg-169 and Arg-223. Gly-265 and Pro-266 together coordinate carbamoyl phosphate.

The protein belongs to the aspartate/ornithine carbamoyltransferase superfamily. ATCase family. Heterododecamer (2C3:3R2) of six catalytic PyrB chains organized as two trimers (C3), and six regulatory PyrI chains organized as three dimers (R2).

It carries out the reaction carbamoyl phosphate + L-aspartate = N-carbamoyl-L-aspartate + phosphate + H(+). Its pathway is pyrimidine metabolism; UMP biosynthesis via de novo pathway; (S)-dihydroorotate from bicarbonate: step 2/3. Catalyzes the condensation of carbamoyl phosphate and aspartate to form carbamoyl aspartate and inorganic phosphate, the committed step in the de novo pyrimidine nucleotide biosynthesis pathway. The polypeptide is Aspartate carbamoyltransferase catalytic subunit (Anaeromyxobacter dehalogenans (strain 2CP-C)).